A 654-amino-acid polypeptide reads, in one-letter code: Protein SERAC1 (654 aa).

The helical transmembrane segment at 32-54 threads the bilayer; sequence NIIKFTGSLILGGSLFLTYEVLA.

It belongs to the SERAC1 family. As to expression, widely expressed, with predominant expression in skeletal muscle and brain. In the brain, highest levels are found in the frontal and occipital cortices, cerebellum and hippocampus.

Its subcellular location is the mitochondrion membrane. It is found in the endoplasmic reticulum. It localises to the mitochondrion. Functionally, facilitates the transport of serine from the cytosol to the mitochondria by interacting with and stabilizing Sideroflexin-1 (SFXN1), a mitochondrial serine transporter, playing a fundamental role in the one-carbon cycle responsible for the synthesis of nucleotides needed for mitochondrial DNA replication. Plays an important role in the phosphatidylglycerol (PG) remodeling that is essential for both mitochondrial function and intracellular cholesterol trafficking. Specifically involved in the exchange of the sn-1 acyl chain from PG 16:0/18:1(9Z) (also known as 1-hexadecanoyl-2-(9Z-octadecenoyl)-sn-glycero-3-phospho-(1'-sn-glycerol)) to PG 18:0/18:1(9Z) (also known as 1-octadecanoyl-2-(9Z-octadecenoyl)-sn-glycero-3-phospho-(1'-sn-glycerol)), a step needed in the bis(monoacylglycerol)phosphate biosynthetic pathway. May have acyltransferase activity although the mechanism for PG remodeling has not been determined. This is Protein SERAC1 (SERAC1) from Homo sapiens (Human).